The chain runs to 68 residues: Small cysteine-rich protein 2 (68 aa).

The N-terminal stretch at 1 to 24 is a signal peptide; the sequence is MAVKFHLCLLLIILVGMGAHVAFA.

Belongs to the Cnidaria small cysteine-rich protein (SCRiP) family. gamma subfamily. Post-translationally, contains 4 disulfide bonds.

It is found in the secreted. The protein localises to the nematocyst. In terms of biological role, induces neurotoxic symptoms on zebrafish. Has also been claimed to be implied in calcification, but tests on homolog proteins suggest that proteins of this family have a neurotoxic function and not a calcification function. The sequence is that of Small cysteine-rich protein 2 from Orbicella faveolata (Mountainous star coral).